A 418-amino-acid chain; its full sequence is Arrestin domain-containing protein 4 (418 aa).

2 short sequence motifs (PPxY motif) span residues 350-353 and 395-398; these read PPNY and PPLY.

This sequence belongs to the arrestin family. Interacts with ADRB2. Interacts (via PPxY motifs) with ITCH, NEDD4L and WWP2. Interacts with AVPR2. Identified in a complex containing at least ARRDC4, AVPR2 and HGS. Interacts with SLC11A2; controls the incorporation of SLC11A2 into extracellular vesicles through an ubiquitination-dependent mechanism. Interacts with TRIM65.

It is found in the early endosome. It localises to the cell membrane. The protein resides in the cytoplasmic vesicle. Functionally, functions as an adapter recruiting ubiquitin-protein ligases to their specific substrates. Plays a role in endocytosis of activated G protein-coupled receptors (GPCRs). Through an ubiquitination-dependent mechanism also plays a role in the incorporation of SLC11A2 into extracellular vesicles. May play a role in glucose uptake. Participates in innate immune response by promoting IFIH1/MDA5 activation through interaction with TRIM65. The polypeptide is Arrestin domain-containing protein 4 (ARRDC4) (Homo sapiens (Human)).